A 133-amino-acid polypeptide reads, in one-letter code: MAVNDTLADMLTRIRNASIVKHDIVPVPSTRMTRSVAEVLKMEGLILEYQDQGEGKDRQLLLTLKYAGRQRRPLITNLKRVSRPGLRVYANRKELPRVLGGIGIAIISTSQGVMTDRDARRAGVGGEVLCYVF.

The protein belongs to the universal ribosomal protein uS8 family. As to quaternary structure, part of the 30S ribosomal subunit. Contacts proteins S5 and S12.

In terms of biological role, one of the primary rRNA binding proteins, it binds directly to 16S rRNA central domain where it helps coordinate assembly of the platform of the 30S subunit. The chain is Small ribosomal subunit protein uS8 from Gloeobacter violaceus (strain ATCC 29082 / PCC 7421).